Consider the following 141-residue polypeptide: Small ribosomal subunit protein uS12 (141 aa).

The protein belongs to the universal ribosomal protein uS12 family. As to quaternary structure, part of the 30S ribosomal subunit.

Its function is as follows. With S4 and S5 plays an important role in translational accuracy. Located at the interface of the 30S and 50S subunits. This Methanobrevibacter smithii (strain ATCC 35061 / DSM 861 / OCM 144 / PS) protein is Small ribosomal subunit protein uS12.